Here is a 269-residue protein sequence, read N- to C-terminus: Mitochondrial distribution and morphology protein 12 (269 aa).

The 269-residue stretch at 1-269 (MSLEVNWEQI…WPNWIEFQGV (269 aa)) folds into the SMP-LTD domain. Positions 72 to 119 (ERAGTGEGDEDDGRVAPTSTPMKHQTSGSSDQTDASNPISPSTSHDHE) are disordered. Over residues 88 to 114 (PTSTPMKHQTSGSSDQTDASNPISPST) the composition is skewed to polar residues.

This sequence belongs to the MDM12 family. Component of the ER-mitochondria encounter structure (ERMES) or MDM complex, composed of MMM1, MDM10, MDM12 and MDM34. An MMM1 homodimer associates with one molecule of MDM12 on each side in a pairwise head-to-tail manner, and the SMP-LTD domains of MMM1 and MDM12 generate a continuous hydrophobic tunnel for phospholipid trafficking.

It is found in the mitochondrion outer membrane. The protein resides in the endoplasmic reticulum membrane. Functionally, component of the ERMES/MDM complex, which serves as a molecular tether to connect the endoplasmic reticulum (ER) and mitochondria. Components of this complex are involved in the control of mitochondrial shape and protein biogenesis, and function in nonvesicular lipid trafficking between the ER and mitochondria. MDM12 is required for the interaction of the ER-resident membrane protein MMM1 and the outer mitochondrial membrane-resident beta-barrel protein MDM10. The MDM12-MMM1 subcomplex functions in the major beta-barrel assembly pathway that is responsible for biogenesis of all mitochondrial outer membrane beta-barrel proteins, and acts in a late step after the SAM complex. The MDM10-MDM12-MMM1 subcomplex further acts in the TOM40-specific pathway after the action of the MDM12-MMM1 complex. Essential for establishing and maintaining the structure of mitochondria and maintenance of mtDNA nucleoids. The protein is Mitochondrial distribution and morphology protein 12 of Komagataella phaffii (strain GS115 / ATCC 20864) (Yeast).